Reading from the N-terminus, the 103-residue chain is Matrix Gla protein (103 aa).

An N-terminal signal peptide occupies residues 1 to 19 (MKSLLLLSILAALAVAALC). Position 21 is a 4-carboxyglutamate; partial (Glu-21). 3 positions are modified to phosphoserine: Ser-22, Ser-25, and Ser-28. In terms of domain architecture, Gla spans 51-97 (RAKAQERIRELNKPQYELNREACDDFKLCERYAMVYGYNAAYDRYFR). A 4-carboxyglutamate mark is found at Glu-56, Glu-60, Glu-67, and Glu-71. Residues Cys-73 and Cys-79 are joined by a disulfide bond. Residues 99–102 (RRGA) constitute a propeptide, removed in short form; probably by carboxypeptidase N. A propeptide (removed in long form; probably by carboxypeptidase H) is located at residue Lys-103.

This sequence belongs to the osteocalcin/matrix Gla protein family. Requires vitamin K-dependent gamma-carboxylation for its function.

It is found in the secreted. In terms of biological role, associates with the organic matrix of bone and cartilage. Thought to act as an inhibitor of bone formation. In Bos taurus (Bovine), this protein is Matrix Gla protein (MGP).